The chain runs to 427 residues: GTPase Obg (427 aa).

One can recognise an Obg domain in the interval 1 to 158 (MFIDKAKIHL…LTVTLELKLI (158 aa)). Residues 159–330 (ADVGLVGFPN…LLDYVSIKLK (172 aa)) form the OBG-type G domain. GTP-binding positions include 165–172 (GFPNVGKS), 190–194 (FTTLT), 212–215 (DIPG), 282–285 (NKTD), and 311–313 (SAA). The Mg(2+) site is built by serine 172 and threonine 192. One can recognise an OCT domain in the interval 347 to 427 (LYELKEKDTN…IYDVEFEYFH (81 aa)).

This sequence belongs to the TRAFAC class OBG-HflX-like GTPase superfamily. OBG GTPase family. As to quaternary structure, monomer. Requires Mg(2+) as cofactor.

Its subcellular location is the cytoplasm. In terms of biological role, an essential GTPase which binds GTP, GDP and possibly (p)ppGpp with moderate affinity, with high nucleotide exchange rates and a fairly low GTP hydrolysis rate. Plays a role in control of the cell cycle, stress response, ribosome biogenesis and in those bacteria that undergo differentiation, in morphogenesis control. In Alkaliphilus metalliredigens (strain QYMF), this protein is GTPase Obg.